We begin with the raw amino-acid sequence, 328 residues long: 4-hydroxy-3-methylbut-2-enyl diphosphate reductase (328 aa).

Residue Cys-24 coordinates [4Fe-4S] cluster. (2E)-4-hydroxy-3-methylbut-2-enyl diphosphate is bound by residues His-55 and His-88. The dimethylallyl diphosphate site is built by His-55 and His-88. The isopentenyl diphosphate site is built by His-55 and His-88. Cys-110 provides a ligand contact to [4Fe-4S] cluster. His-138 is a (2E)-4-hydroxy-3-methylbut-2-enyl diphosphate binding site. His-138 is a binding site for dimethylallyl diphosphate. His-138 is a binding site for isopentenyl diphosphate. Glu-140 acts as the Proton donor in catalysis. Thr-178 serves as a coordination point for (2E)-4-hydroxy-3-methylbut-2-enyl diphosphate. Cys-208 serves as a coordination point for [4Fe-4S] cluster. Residues Ser-236, Ser-237, Asn-238, and Ser-279 each contribute to the (2E)-4-hydroxy-3-methylbut-2-enyl diphosphate site. The dimethylallyl diphosphate site is built by Ser-236, Ser-237, Asn-238, and Ser-279. Residues Ser-236, Ser-237, Asn-238, and Ser-279 each contribute to the isopentenyl diphosphate site.

The protein belongs to the IspH family. [4Fe-4S] cluster serves as cofactor.

The catalysed reaction is isopentenyl diphosphate + 2 oxidized [2Fe-2S]-[ferredoxin] + H2O = (2E)-4-hydroxy-3-methylbut-2-enyl diphosphate + 2 reduced [2Fe-2S]-[ferredoxin] + 2 H(+). The enzyme catalyses dimethylallyl diphosphate + 2 oxidized [2Fe-2S]-[ferredoxin] + H2O = (2E)-4-hydroxy-3-methylbut-2-enyl diphosphate + 2 reduced [2Fe-2S]-[ferredoxin] + 2 H(+). The protein operates within isoprenoid biosynthesis; dimethylallyl diphosphate biosynthesis; dimethylallyl diphosphate from (2E)-4-hydroxy-3-methylbutenyl diphosphate: step 1/1. It participates in isoprenoid biosynthesis; isopentenyl diphosphate biosynthesis via DXP pathway; isopentenyl diphosphate from 1-deoxy-D-xylulose 5-phosphate: step 6/6. Catalyzes the conversion of 1-hydroxy-2-methyl-2-(E)-butenyl 4-diphosphate (HMBPP) into a mixture of isopentenyl diphosphate (IPP) and dimethylallyl diphosphate (DMAPP). Acts in the terminal step of the DOXP/MEP pathway for isoprenoid precursor biosynthesis. In Ehrlichia ruminantium (strain Welgevonden), this protein is 4-hydroxy-3-methylbut-2-enyl diphosphate reductase.